Consider the following 289-residue polypeptide: Zinc finger matrin-type protein 3 (289 aa).

Residues 1-42 (MILLQHAVLPPPKQPSPSPPMSVATRSTGTLQLPPQKPFGQE) form a disordered region. Positions 9 to 20 (LPPPKQPSPSPP) are enriched in pro residues. The span at 24-33 (ATRSTGTLQL) shows a compositional bias: polar residues. 2 Matrin-type zinc fingers span residues 70 to 100 (LYCK…KLRN) and 147 to 177 (DYCK…RLRL). The segment covering 180–191 (AQSNSFSESSEL) has biased composition (polar residues). Residues 180–201 (AQSNSFSESSELGQRRARKEGN) form a disordered region. The segment at 246-276 (FYCSMCNVGAGEEMEFRQHLESKQHKSKVSE) adopts a Matrin-type 3 zinc-finger fold.

As to quaternary structure, interacts with dsRNA. In terms of tissue distribution, highly expressed in adult brain, and moderately in adult kidney and testis. Not detected in fetal brain, heart, pancreas, adrenal gland, liver or small intestine.

It is found in the nucleus. Its subcellular location is the nucleolus. Its function is as follows. Acts as a bona fide target gene of p53/TP53. May play a role in the TP53-dependent growth regulatory pathway. May contribute to TP53-mediated apoptosis by regulation of TP53 expression and translocation to the nucleus and nucleolus. This Homo sapiens (Human) protein is Zinc finger matrin-type protein 3.